The primary structure comprises 419 residues: L-cysteine:1D-myo-inositol 2-amino-2-deoxy-alpha-D-glucopyranoside ligase (419 aa).

Residues 1-20 are disordered; it reads MRSWSVPEVPALPGRGPRVH. C44 contributes to the Zn(2+) binding site. Residues 44–47, T59, and 82–84 contribute to the L-cysteinyl-5'-AMP site; these read CGIT and NVT. The 'HIGH' region signature appears at 46–56; the sequence is ITPYDATHLGH. Positions 191-196 match the 'ERGGDP' region motif; it reads ERGGDP. W232 serves as a coordination point for L-cysteinyl-5'-AMP. A Zn(2+)-binding site is contributed by C236. 254–256 contacts L-cysteinyl-5'-AMP; sequence GSD. Residue H261 participates in Zn(2+) binding. Residue V289 participates in L-cysteinyl-5'-AMP binding. The 'KMSKS' region signature appears at 295–299; that stretch reads KMSKS.

The protein belongs to the class-I aminoacyl-tRNA synthetase family. MshC subfamily. Monomer. Requires Zn(2+) as cofactor.

The catalysed reaction is 1D-myo-inositol 2-amino-2-deoxy-alpha-D-glucopyranoside + L-cysteine + ATP = 1D-myo-inositol 2-(L-cysteinylamino)-2-deoxy-alpha-D-glucopyranoside + AMP + diphosphate + H(+). Its function is as follows. Catalyzes the ATP-dependent condensation of GlcN-Ins and L-cysteine to form L-Cys-GlcN-Ins. This is L-cysteine:1D-myo-inositol 2-amino-2-deoxy-alpha-D-glucopyranoside ligase from Kineococcus radiotolerans (strain ATCC BAA-149 / DSM 14245 / SRS30216).